Consider the following 197-residue polypeptide: NADH-quinone oxidoreductase subunit C (197 aa).

The protein belongs to the complex I 30 kDa subunit family. NDH-1 is composed of 14 different subunits. Subunits NuoB, C, D, E, F, and G constitute the peripheral sector of the complex.

It localises to the cell inner membrane. The enzyme catalyses a quinone + NADH + 5 H(+)(in) = a quinol + NAD(+) + 4 H(+)(out). Functionally, NDH-1 shuttles electrons from NADH, via FMN and iron-sulfur (Fe-S) centers, to quinones in the respiratory chain. The immediate electron acceptor for the enzyme in this species is believed to be ubiquinone. Couples the redox reaction to proton translocation (for every two electrons transferred, four hydrogen ions are translocated across the cytoplasmic membrane), and thus conserves the redox energy in a proton gradient. The sequence is that of NADH-quinone oxidoreductase subunit C from Neisseria meningitidis serogroup C (strain 053442).